We begin with the raw amino-acid sequence, 315 residues long: Methionyl-tRNA formyltransferase (315 aa).

Ser110–Pro113 contributes to the (6S)-5,6,7,8-tetrahydrofolate binding site.

Belongs to the Fmt family.

The enzyme catalyses L-methionyl-tRNA(fMet) + (6R)-10-formyltetrahydrofolate = N-formyl-L-methionyl-tRNA(fMet) + (6S)-5,6,7,8-tetrahydrofolate + H(+). Functionally, attaches a formyl group to the free amino group of methionyl-tRNA(fMet). The formyl group appears to play a dual role in the initiator identity of N-formylmethionyl-tRNA by promoting its recognition by IF2 and preventing the misappropriation of this tRNA by the elongation apparatus. The sequence is that of Methionyl-tRNA formyltransferase from Lactobacillus delbrueckii subsp. bulgaricus (strain ATCC BAA-365 / Lb-18).